The following is a 79-amino-acid chain: U-myrmeciitoxin(01)-Mg9a (79 aa).

An N-terminal signal peptide occupies residues 1 to 21 (MKLSCLLLTLAIIFVLTIVHA). The propeptide occupies 22 to 48 (PNVEAKALANPESDAIGFADAVGEADP). At Q78 the chain carries Glutamine amide.

As to expression, expressed by the venom gland.

Its subcellular location is the secreted. In terms of biological role, may have antimicrobial properties, like most ant linear peptides. The polypeptide is U-myrmeciitoxin(01)-Mg9a (Myrmecia gulosa (Red bulldog ant)).